The following is a 255-amino-acid chain: Probable cyclic nucleotide phosphodiesterase syc0937_d (255 aa).

Fe cation is bound by residues Asp-19, His-21, Asp-59, Asn-89, His-157, His-196, and His-198. AMP is bound by residues His-21, Asp-59, and 89–90 (NH). His-198 is an AMP binding site.

Belongs to the cyclic nucleotide phosphodiesterase class-III family. Fe(2+) is required as a cofactor.

The polypeptide is Probable cyclic nucleotide phosphodiesterase syc0937_d (Synechococcus sp. (strain ATCC 27144 / PCC 6301 / SAUG 1402/1) (Anacystis nidulans)).